A 392-amino-acid polypeptide reads, in one-letter code: Succinate--CoA ligase [ADP-forming] subunit beta (392 aa).

The region spanning 9 to 247 is the ATP-grasp domain; it reads KEILRVCGVP…LYEEDPKEIE (239 aa). ATP contacts are provided by residues lysine 49, 56-58, glutamate 102, glutamine 105, and glutamate 110; that span reads GRG. 2 residues coordinate Mg(2+): asparagine 202 and aspartate 216. Substrate is bound by residues asparagine 267 and 324 to 326; that span reads GIM.

The protein belongs to the succinate/malate CoA ligase beta subunit family. Heterotetramer of two alpha and two beta subunits. Requires Mg(2+) as cofactor.

The enzyme catalyses succinate + ATP + CoA = succinyl-CoA + ADP + phosphate. It carries out the reaction GTP + succinate + CoA = succinyl-CoA + GDP + phosphate. It functions in the pathway carbohydrate metabolism; tricarboxylic acid cycle; succinate from succinyl-CoA (ligase route): step 1/1. Functionally, succinyl-CoA synthetase functions in the citric acid cycle (TCA), coupling the hydrolysis of succinyl-CoA to the synthesis of either ATP or GTP and thus represents the only step of substrate-level phosphorylation in the TCA. The beta subunit provides nucleotide specificity of the enzyme and binds the substrate succinate, while the binding sites for coenzyme A and phosphate are found in the alpha subunit. This chain is Succinate--CoA ligase [ADP-forming] subunit beta, found in Neorickettsia sennetsu (strain ATCC VR-367 / Miyayama) (Ehrlichia sennetsu).